We begin with the raw amino-acid sequence, 359 residues long: Protein-arginine kinase (359 aa).

Positions 25-257 (IVISSRVRLA…QQVIEQERML (233 aa)) constitute a Phosphagen kinase C-terminal domain. ATP is bound by residues 28-32 (SSRVR), histidine 93, arginine 128, 179-183 (RASLM), and 210-215 (RGIYGE). The RDXXRA motif of the pArg binding pocket involved in allosteric regulation signature appears at 340 to 345 (RDAKRA).

Belongs to the ATP:guanido phosphotransferase family.

The catalysed reaction is L-arginyl-[protein] + ATP = N(omega)-phospho-L-arginyl-[protein] + ADP + H(+). With respect to regulation, appears to be allosterically activated by the binding of pArg-containing polypeptides to the pArg-binding pocket localized in the C-terminal domain of McsB. Catalyzes the specific phosphorylation of arginine residues in proteins. This chain is Protein-arginine kinase, found in Syntrophomonas wolfei subsp. wolfei (strain DSM 2245B / Goettingen).